Consider the following 295-residue polypeptide: Ankyrin repeat and SOCS box protein 17 (295 aa).

The stretch at 146 to 176 (SGITPLLYVAQTRQSNILKILLQYGILEREK) is one ANK repeat. The SOCS box domain occupies 232-295 (LGRRPIISNW…RLQKYLNLES (64 aa)).

The protein belongs to the ankyrin SOCS box (ASB) family.

It participates in protein modification; protein ubiquitination. In terms of biological role, may be a substrate-recognition component of a SCF-like ECS (Elongin-Cullin-SOCS-box protein) E3 ubiquitin-protein ligase complex which mediates the ubiquitination and subsequent proteasomal degradation of target proteins. This chain is Ankyrin repeat and SOCS box protein 17 (ASB17), found in Canis lupus familiaris (Dog).